Consider the following 589-residue polypeptide: Nicotinate phosphoribosyltransferase (589 aa).

Residues 1–30 (MSQSNTPLKRKKTENGYSENGSTTGATSNQ) are disordered. Residues 15–30 (NGYSENGSTTGATSNQ) show a composition bias toward polar residues. Residues Tyr68 and Thr256 each coordinate nicotinate. Position 259 is a phosphohistidine (His259). Residue Arg356 coordinates nicotinate. Thr418 provides a ligand contact to 5-phospho-alpha-D-ribose 1-diphosphate.

The protein belongs to the NAPRTase family. Mg(2+) is required as a cofactor. The cofactor is Mn(2+). In terms of processing, transiently phosphorylated on a His residue during the reaction cycle. Phosphorylation strongly increases the affinity for substrates and increases the rate of nicotinate D-ribonucleotide production. Dephosphorylation regenerates the low-affinity form of the enzyme, leading to product release.

It carries out the reaction nicotinate + 5-phospho-alpha-D-ribose 1-diphosphate + ATP + H2O = nicotinate beta-D-ribonucleotide + ADP + phosphate + diphosphate. It participates in cofactor biosynthesis; NAD(+) biosynthesis; nicotinate D-ribonucleotide from nicotinate: step 1/1. Functionally, catalyzes the first step in the biosynthesis of NAD from nicotinic acid, the ATP-dependent synthesis of beta-nicotinate D-ribonucleotide from nicotinate and 5-phospho-D-ribose 1-phosphate. Helps prevent cellular oxidative stress via its role in NAD biosynthesis. The sequence is that of Nicotinate phosphoribosyltransferase (naprt) from Dictyostelium discoideum (Social amoeba).